The sequence spans 71 residues: Protein PSY2 (71 aa).

A signal peptide spans 1-20 (MSFGTRLLLFLILTLPLVTS). The propeptide occupies 21–46 (SSPNTLHVSGIVKTGTTSRFLMMTIE). Residue Tyr-48 is modified to Sulfotyrosine. The tract at residues 50–71 (DPSANTRHDPSVPTNAKADTTP) is disordered. The span at 61-71 (VPTNAKADTTP) shows a compositional bias: polar residues. 4-hydroxyproline is present on Pro-62. O-linked (Ara...) hydroxyproline glycosylation is present at Pro-62. Positions 65–71 (AKADTTP) are excised as a propeptide.

It belongs to the sulfated-peptide plant hormone family. The sulfation and the glycosylation are required for full activity.

Its subcellular location is the secreted. Functionally, promotes cellular proliferation and expansion. The sequence is that of Protein PSY2 (PSY2) from Arabidopsis thaliana (Mouse-ear cress).